The primary structure comprises 404 residues: Probable tRNA sulfurtransferase (404 aa).

Residues 60–165 (QPIVEALKLV…DEAAYISYEE (106 aa)) enclose the THUMP domain. ATP-binding positions include 183–184 (ML), 208–209 (HF), Arg-265, Gly-287, and Gln-296.

The protein belongs to the ThiI family.

Its subcellular location is the cytoplasm. The enzyme catalyses [ThiI sulfur-carrier protein]-S-sulfanyl-L-cysteine + a uridine in tRNA + 2 reduced [2Fe-2S]-[ferredoxin] + ATP + H(+) = [ThiI sulfur-carrier protein]-L-cysteine + a 4-thiouridine in tRNA + 2 oxidized [2Fe-2S]-[ferredoxin] + AMP + diphosphate. It catalyses the reaction [ThiS sulfur-carrier protein]-C-terminal Gly-Gly-AMP + S-sulfanyl-L-cysteinyl-[cysteine desulfurase] + AH2 = [ThiS sulfur-carrier protein]-C-terminal-Gly-aminoethanethioate + L-cysteinyl-[cysteine desulfurase] + A + AMP + 2 H(+). It functions in the pathway cofactor biosynthesis; thiamine diphosphate biosynthesis. Its function is as follows. Catalyzes the ATP-dependent transfer of a sulfur to tRNA to produce 4-thiouridine in position 8 of tRNAs, which functions as a near-UV photosensor. Also catalyzes the transfer of sulfur to the sulfur carrier protein ThiS, forming ThiS-thiocarboxylate. This is a step in the synthesis of thiazole, in the thiamine biosynthesis pathway. The sulfur is donated as persulfide by IscS. The sequence is that of Probable tRNA sulfurtransferase from Streptococcus pyogenes serotype M1.